The sequence spans 213 residues: Ribosomal RNA small subunit methyltransferase G (213 aa).

Residues glycine 72, phenylalanine 77, 125 to 126 (IE), and arginine 141 contribute to the S-adenosyl-L-methionine site.

It belongs to the methyltransferase superfamily. RNA methyltransferase RsmG family.

The protein localises to the cytoplasm. The catalysed reaction is guanosine(527) in 16S rRNA + S-adenosyl-L-methionine = N(7)-methylguanosine(527) in 16S rRNA + S-adenosyl-L-homocysteine. Its function is as follows. Specifically methylates the N7 position of guanine in position 527 of 16S rRNA. The chain is Ribosomal RNA small subunit methyltransferase G from Sinorhizobium medicae (strain WSM419) (Ensifer medicae).